Here is a 432-residue protein sequence, read N- to C-terminus: Putative D-alanyl-D-alanine carboxypeptidase (432 aa).

The helical; Signal-anchor transmembrane segment at 7–25 threads the bilayer; the sequence is ATVLLTFSLSAFAVEYPVL.

Belongs to the peptidase S12 family. YfeW subfamily.

The protein localises to the cell inner membrane. The enzyme catalyses Preferential cleavage: (Ac)2-L-Lys-D-Ala-|-D-Ala. Also transpeptidation of peptidyl-alanyl moieties that are N-acyl substituents of D-alanine.. The chain is Putative D-alanyl-D-alanine carboxypeptidase from Salmonella typhi.